Reading from the N-terminus, the 39-residue chain is Photosystem II reaction center protein J (39 aa).

Residues 7-27 (IPLWIVATVAGTGVLVVVGLF) traverse the membrane as a helical segment.

This sequence belongs to the PsbJ family. As to quaternary structure, PSII is composed of 1 copy each of membrane proteins PsbA, PsbB, PsbC, PsbD, PsbE, PsbF, PsbH, PsbI, PsbJ, PsbK, PsbL, PsbM, PsbT, PsbX, PsbY, PsbZ, Psb30/Ycf12, peripheral proteins PsbO, CyanoQ (PsbQ), PsbU, PsbV and a large number of cofactors. It forms dimeric complexes.

It localises to the cellular thylakoid membrane. In terms of biological role, one of the components of the core complex of photosystem II (PSII). PSII is a light-driven water:plastoquinone oxidoreductase that uses light energy to abstract electrons from H(2)O, generating O(2) and a proton gradient subsequently used for ATP formation. It consists of a core antenna complex that captures photons, and an electron transfer chain that converts photonic excitation into a charge separation. The polypeptide is Photosystem II reaction center protein J (Synechococcus elongatus (strain ATCC 33912 / PCC 7942 / FACHB-805) (Anacystis nidulans R2)).